The following is a 255-amino-acid chain: Tryptophan synthase alpha chain (255 aa).

Residues E42 and D53 each act as proton acceptor in the active site.

It belongs to the TrpA family. As to quaternary structure, tetramer of two alpha and two beta chains.

It carries out the reaction (1S,2R)-1-C-(indol-3-yl)glycerol 3-phosphate + L-serine = D-glyceraldehyde 3-phosphate + L-tryptophan + H2O. Its pathway is amino-acid biosynthesis; L-tryptophan biosynthesis; L-tryptophan from chorismate: step 5/5. In terms of biological role, the alpha subunit is responsible for the aldol cleavage of indoleglycerol phosphate to indole and glyceraldehyde 3-phosphate. The sequence is that of Tryptophan synthase alpha chain from Wolinella succinogenes (strain ATCC 29543 / DSM 1740 / CCUG 13145 / JCM 31913 / LMG 7466 / NCTC 11488 / FDC 602W) (Vibrio succinogenes).